Here is a 541-residue protein sequence, read N- to C-terminus: Glutamine-dependent NAD(+) synthetase (541 aa).

A CN hydrolase domain is found at Phe4–Ile243. The Proton acceptor; for glutaminase activity role is filled by Glu44. Lys111 serves as the catalytic For glutaminase activity. Tyr117 provides a ligand contact to L-glutamine. The active-site Nucleophile; for glutaminase activity is Cys147. 2 residues coordinate L-glutamine: Ser173 and Lys179. Gly286 to Ser293 is a binding site for ATP. Residue Asn369 participates in deamido-NAD(+) binding. Residue Thr393 participates in ATP binding. 2 residues coordinate deamido-NAD(+): Glu398 and Lys510.

This sequence in the C-terminal section; belongs to the NAD synthetase family.

The catalysed reaction is deamido-NAD(+) + L-glutamine + ATP + H2O = L-glutamate + AMP + diphosphate + NAD(+) + H(+). It functions in the pathway cofactor biosynthesis; NAD(+) biosynthesis; NAD(+) from deamido-NAD(+) (L-Gln route): step 1/1. Functionally, catalyzes the ATP-dependent amidation of deamido-NAD to form NAD. Uses L-glutamine as a nitrogen source. In vitro, can also use ammonia as donor with comparable specific activity, but cannot use nicotinate mononucleotide (NaMN) as substrate. In Acinetobacter baylyi (strain ATCC 33305 / BD413 / ADP1), this protein is Glutamine-dependent NAD(+) synthetase.